The following is a 75-amino-acid chain: Probable [Fe-S]-dependent transcriptional repressor (75 aa).

Cys55, Cys60, Cys63, and Cys72 together coordinate iron-sulfur cluster.

It belongs to the FeoC family.

In terms of biological role, may function as a transcriptional regulator that controls feoABC expression. This chain is Probable [Fe-S]-dependent transcriptional repressor, found in Serratia marcescens.